The sequence spans 175 residues: Inorganic pyrophosphatase (175 aa).

Substrate contacts are provided by lysine 30, arginine 44, and tyrosine 56. Residues aspartate 66, aspartate 71, and aspartate 103 each coordinate Mg(2+). Tyrosine 142 contacts substrate.

The protein belongs to the PPase family. As to quaternary structure, homohexamer. Mg(2+) is required as a cofactor.

Its subcellular location is the cytoplasm. It carries out the reaction diphosphate + H2O = 2 phosphate + H(+). Catalyzes the hydrolysis of inorganic pyrophosphate (PPi) forming two phosphate ions. In Ralstonia nicotianae (strain ATCC BAA-1114 / GMI1000) (Ralstonia solanacearum), this protein is Inorganic pyrophosphatase.